Here is a 791-residue protein sequence, read N- to C-terminus: ATP-dependent 6-phosphofructokinase, platelet type (791 aa).

Met1 carries the N-acetylmethionine modification. Residues 1-399 form an N-terminal catalytic PFK domain 1 region; sequence MDNKVSASPR…NLNTYKRLAI (399 aa). A Phosphoserine modification is found at Ser6. Ser12 is modified (phosphoserine; by PKA). Ser21 bears the Phosphoserine mark. ATP is bound by residues Gly34, 97–98, and 127–130; these read RS and GSGS. The residue at position 142 (Ser142) is a Phosphoserine. Substrate-binding positions include 173-175, Arg210, 217-219, Glu273, Arg301, and 307-310; these read SID, MGR, and HVQR. Asp175 serves as the catalytic Proton acceptor. A Phosphoserine modification is found at Ser386. Lys395 carries the post-translational modification N6-acetyllysine. Residues 400-411 are interdomain linker; it reads KLPDDKIQKSNC. Residues 412 to 791 form a C-terminal regulatory PFK domain 2 region; that stretch reads NVAVINVGAP…RGGPEEPAAI (380 aa). Arg481 provides a ligand contact to beta-D-fructose 2,6-bisphosphate. The residue at position 486 (Lys486) is an N6-acetyllysine. Residues 538-542, Arg576, 583-585, and Glu639 each bind beta-D-fructose 2,6-bisphosphate; these read TVSNN and MGG. Ser540 carries an O-linked (GlcNAc) serine glycan. Tyr651 carries the phosphotyrosine modification. Beta-D-fructose 2,6-bisphosphate contacts are provided by residues Arg665 and 671–674; that span reads HMQQ. Residue Lys688 is modified to N6-acetyllysine. Arg744 is a binding site for beta-D-fructose 2,6-bisphosphate.

It belongs to the phosphofructokinase type A (PFKA) family. ATP-dependent PFK group I subfamily. Eukaryotic two domain clade 'E' sub-subfamily. In terms of assembly, homo- and heterotetramers. Phosphofructokinase (PFK) enzyme functions as a tetramer composed of different combinations of 3 types of subunits, called PFKM (M), PFKL (L) and PFKP (P). The composition of the PFK tetramer differs according to the tissue type it is present in. The kinetic and regulatory properties of the tetrameric enzyme are dependent on the subunit composition, hence can vary across tissues. Interacts with ATG4B; promoting phosphorylation of ATG4B. Mg(2+) serves as cofactor. Post-translationally, glcNAcylation decreases enzyme activity. Phosphorylation at Ser-386 promotes interaction with ATG4B.

The protein localises to the cytoplasm. It carries out the reaction beta-D-fructose 6-phosphate + ATP = beta-D-fructose 1,6-bisphosphate + ADP + H(+). It functions in the pathway carbohydrate degradation; glycolysis; D-glyceraldehyde 3-phosphate and glycerone phosphate from D-glucose: step 3/4. With respect to regulation, allosterically activated by ADP, AMP, or fructose 2,6-bisphosphate, and allosterically inhibited by ATP or citrate. Functionally, catalyzes the phosphorylation of D-fructose 6-phosphate to fructose 1,6-bisphosphate by ATP, the first committing step of glycolysis. This is ATP-dependent 6-phosphofructokinase, platelet type (PFKP) from Oryctolagus cuniculus (Rabbit).